The following is a 570-amino-acid chain: Hydroxylamine reductase (570 aa).

[4Fe-4S] cluster contacts are provided by Cys5, Cys8, Cys17, and Cys23. Positions 266, 290, 334, 425, 453, 478, 513, and 515 each coordinate hybrid [4Fe-2O-2S] cluster. The residue at position 425 (Cys425) is a Cysteine persulfide.

It belongs to the HCP family. [4Fe-4S] cluster is required as a cofactor. Requires hybrid [4Fe-2O-2S] cluster as cofactor.

The protein localises to the cytoplasm. The enzyme catalyses A + NH4(+) + H2O = hydroxylamine + AH2 + H(+). Its function is as follows. Catalyzes the reduction of hydroxylamine to form NH(3) and H(2)O. The chain is Hydroxylamine reductase from Clostridium botulinum (strain 657 / Type Ba4).